A 1321-amino-acid chain; its full sequence is Guanine nucleotide exchange factor subunit RIC1 (1321 aa).

WD repeat units lie at residues 63 to 102 (AQFG…DDKY) and 303 to 342 (NKTG…LICT). Residues 945–964 (SGESETPPTTPTTQEQSPSS) form a disordered region.

Forms a complex with rgp1; the interaction enhances rab6a GTPase activity.

Its subcellular location is the cytoplasm. It localises to the cytosol. The protein resides in the membrane. The RIC1-RGP1 complex acts as a guanine nucleotide exchange factor (GEF), which activates RAB6A by exchanging bound GDP for free GTP, and may be thereby required for efficient fusion of endosome-derived vesicles with the Golgi compartment. The RIC1-RGP1 complex participates in the recycling of mannose-6-phosphate receptors. It is a regulator of procollagen transport and secretion, and is required for correct cartilage morphogenesis and development of the craniofacial skeleton. In Danio rerio (Zebrafish), this protein is Guanine nucleotide exchange factor subunit RIC1 (ric1).